A 349-amino-acid chain; its full sequence is Protein RecA (349 aa).

Glycine 65 to threonine 72 is a binding site for ATP.

Belongs to the RecA family.

The protein localises to the cytoplasm. Can catalyze the hydrolysis of ATP in the presence of single-stranded DNA, the ATP-dependent uptake of single-stranded DNA by duplex DNA, and the ATP-dependent hybridization of homologous single-stranded DNAs. It interacts with LexA causing its activation and leading to its autocatalytic cleavage. The polypeptide is Protein RecA (Clostridium acetobutylicum (strain ATCC 824 / DSM 792 / JCM 1419 / IAM 19013 / LMG 5710 / NBRC 13948 / NRRL B-527 / VKM B-1787 / 2291 / W)).